The following is a 148-amino-acid chain: Lysozyme C (148 aa).

A signal peptide spans methionine 1–glycine 18. A C-type lysozyme domain is found at lysine 19–valine 148. 4 cysteine pairs are disulfide-bonded: cysteine 24/cysteine 146, cysteine 48/cysteine 134, cysteine 83/cysteine 99, and cysteine 95/cysteine 113. Active-site residues include glutamate 53 and aspartate 71.

It belongs to the glycosyl hydrolase 22 family. Monomer.

It carries out the reaction Hydrolysis of (1-&gt;4)-beta-linkages between N-acetylmuramic acid and N-acetyl-D-glucosamine residues in a peptidoglycan and between N-acetyl-D-glucosamine residues in chitodextrins.. Functionally, lysozymes have primarily a bacteriolytic function; those in tissues and body fluids are associated with the monocyte-macrophage system and enhance the activity of immunoagents. The polypeptide is Lysozyme C (LYZ) (Gorilla gorilla gorilla (Western lowland gorilla)).